The chain runs to 445 residues: 3-phosphoshikimate 1-carboxyvinyltransferase (445 aa).

Lys28, Ser29, and Arg33 together coordinate 3-phosphoshikimate. Residue Lys28 coordinates phosphoenolpyruvate. Residues Gly102 and Arg130 each coordinate phosphoenolpyruvate. 5 residues coordinate 3-phosphoshikimate: Ser179, Ser180, Gln181, Glu330, and His357. Position 181 (Gln181) interacts with phosphoenolpyruvate. Catalysis depends on Glu330, which acts as the Proton acceptor. Residues Arg361, Arg405, and Lys430 each coordinate phosphoenolpyruvate.

It belongs to the EPSP synthase family. In terms of assembly, monomer.

The protein localises to the cytoplasm. The enzyme catalyses 3-phosphoshikimate + phosphoenolpyruvate = 5-O-(1-carboxyvinyl)-3-phosphoshikimate + phosphate. It functions in the pathway metabolic intermediate biosynthesis; chorismate biosynthesis; chorismate from D-erythrose 4-phosphate and phosphoenolpyruvate: step 6/7. In terms of biological role, catalyzes the transfer of the enolpyruvyl moiety of phosphoenolpyruvate (PEP) to the 5-hydroxyl of shikimate-3-phosphate (S3P) to produce enolpyruvyl shikimate-3-phosphate and inorganic phosphate. The chain is 3-phosphoshikimate 1-carboxyvinyltransferase from Bifidobacterium longum (strain DJO10A).